The chain runs to 270 residues: tRNA (guanine-N(1)-)-methyltransferase (270 aa).

S-adenosyl-L-methionine-binding positions include Gly119 and 139 to 144; that span reads IGDYVI.

It belongs to the RNA methyltransferase TrmD family. In terms of assembly, homodimer.

It is found in the cytoplasm. It carries out the reaction guanosine(37) in tRNA + S-adenosyl-L-methionine = N(1)-methylguanosine(37) in tRNA + S-adenosyl-L-homocysteine + H(+). Functionally, specifically methylates guanosine-37 in various tRNAs. The sequence is that of tRNA (guanine-N(1)-)-methyltransferase from Nitrosomonas europaea (strain ATCC 19718 / CIP 103999 / KCTC 2705 / NBRC 14298).